The chain runs to 250 residues: Small ribosomal subunit protein uS3 (250 aa).

A KH type-2 domain is found at 39 to 107; that stretch reads VREFLTKKLK…PAQVSINEID (69 aa). Residues 215–250 form a disordered region; it reads MNPAPAEERPAKRGRGRGEGQERRGRRGDRAADKGE. The segment covering 220–250 has biased composition (basic and acidic residues); sequence AEERPAKRGRGRGEGQERRGRRGDRAADKGE.

The protein belongs to the universal ribosomal protein uS3 family. In terms of assembly, part of the 30S ribosomal subunit. Forms a tight complex with proteins S10 and S14.

Binds the lower part of the 30S subunit head. Binds mRNA in the 70S ribosome, positioning it for translation. The polypeptide is Small ribosomal subunit protein uS3 (Acinetobacter baumannii (strain SDF)).